The following is a 282-amino-acid chain: L-allo-isoleucyltransferase (282 aa).

Cys-105 (acyl-thioester intermediate) is an active-site residue. Residues 169 to 261 (HTQSTYTPSD…DGQHHDFVDG (93 aa)) form the AB hydrolase-1 domain.

This sequence belongs to the AB hydrolase superfamily.

The enzyme catalyses holo-[CmaD peptidyl-carrier protein] + L-alloisoleucyl-[CmaA peptidyl-carrier protein] = L-alloisoleucyl-[CmaD peptidyl-carrier protein] + holo-[CmaA peptidyl-carrier protein]. Functionally, involved in the biosynthesis of the phytotoxin coronatine (COR). Catalyzes the transfer of the aminoacyl group covalently attached to the pantetheinyl arm of CmaA to the holo-pantetheinyl arm of CmaD. During the shuttling process, CmaE generates a covalent-aminoacyl-S-Cys enzyme intermediate by the action of its donor substrate L-aminoacyl-S-CmaA and delivers it to the sulfhydryl group attached to the phosphopantetheinyl arm on CmaD. This Pseudomonas savastanoi pv. glycinea (Pseudomonas syringae pv. glycinea) protein is L-allo-isoleucyltransferase.